The primary structure comprises 512 residues: Glutathione-binding protein GsiB (512 aa).

The signal sequence occupies residues 1 to 26 (MARAVHRSGLVALGIATALMASCAFA).

Belongs to the bacterial solute-binding protein 5 family. As to quaternary structure, the complex is composed of two ATP-binding proteins (GsiA), two transmembrane proteins (GsiC and GsiD) and a solute-binding protein (GsiB).

The protein localises to the periplasm. Part of the ABC transporter complex GsiABCD involved in glutathione import. Binds glutathione. The polypeptide is Glutathione-binding protein GsiB (Escherichia coli O6:K15:H31 (strain 536 / UPEC)).